Consider the following 285-residue polypeptide: Pantothenate synthetase (285 aa).

30-37 (MGFLHEGH) contacts ATP. The active-site Proton donor is the histidine 37. Glutamine 61 is a (R)-pantoate binding site. Beta-alanine is bound at residue glutamine 61. Residue 147 to 150 (GQKD) coordinates ATP. Position 153 (glutamine 153) interacts with (R)-pantoate. ATP-binding positions include valine 176 and 184 to 187 (KSSR).

It belongs to the pantothenate synthetase family. Homodimer.

The protein localises to the cytoplasm. The enzyme catalyses (R)-pantoate + beta-alanine + ATP = (R)-pantothenate + AMP + diphosphate + H(+). It functions in the pathway cofactor biosynthesis; (R)-pantothenate biosynthesis; (R)-pantothenate from (R)-pantoate and beta-alanine: step 1/1. In terms of biological role, catalyzes the condensation of pantoate with beta-alanine in an ATP-dependent reaction via a pantoyl-adenylate intermediate. The polypeptide is Pantothenate synthetase (Listeria welshimeri serovar 6b (strain ATCC 35897 / DSM 20650 / CCUG 15529 / CIP 8149 / NCTC 11857 / SLCC 5334 / V8)).